We begin with the raw amino-acid sequence, 359 residues long: Histidinol-phosphate aminotransferase (359 aa).

K212 is subject to N6-(pyridoxal phosphate)lysine.

The protein belongs to the class-II pyridoxal-phosphate-dependent aminotransferase family. Histidinol-phosphate aminotransferase subfamily. Homodimer. It depends on pyridoxal 5'-phosphate as a cofactor.

The enzyme catalyses L-histidinol phosphate + 2-oxoglutarate = 3-(imidazol-4-yl)-2-oxopropyl phosphate + L-glutamate. It participates in amino-acid biosynthesis; L-histidine biosynthesis; L-histidine from 5-phospho-alpha-D-ribose 1-diphosphate: step 7/9. This chain is Histidinol-phosphate aminotransferase, found in Buchnera aphidicola subsp. Melaphis rhois.